The sequence spans 166 residues: Large ribosomal subunit protein uL10 (166 aa).

It belongs to the universal ribosomal protein uL10 family. Part of the ribosomal stalk of the 50S ribosomal subunit. The N-terminus interacts with L11 and the large rRNA to form the base of the stalk. The C-terminus forms an elongated spine to which L12 dimers bind in a sequential fashion forming a multimeric L10(L12)X complex.

Its function is as follows. Forms part of the ribosomal stalk, playing a central role in the interaction of the ribosome with GTP-bound translation factors. In Streptococcus uberis (strain ATCC BAA-854 / 0140J), this protein is Large ribosomal subunit protein uL10.